The following is a 263-amino-acid chain: 3-methyl-2-oxobutanoate hydroxymethyltransferase (263 aa).

Aspartate 45 and aspartate 84 together coordinate Mg(2+). 3-methyl-2-oxobutanoate is bound by residues 45 to 46, aspartate 84, and lysine 112; that span reads DS. Mg(2+) is bound at residue glutamate 114. The active-site Proton acceptor is glutamate 180.

The protein belongs to the PanB family. In terms of assembly, homodecamer; pentamer of dimers. Requires Mg(2+) as cofactor.

It localises to the cytoplasm. It carries out the reaction 3-methyl-2-oxobutanoate + (6R)-5,10-methylene-5,6,7,8-tetrahydrofolate + H2O = 2-dehydropantoate + (6S)-5,6,7,8-tetrahydrofolate. The protein operates within cofactor biosynthesis; (R)-pantothenate biosynthesis; (R)-pantoate from 3-methyl-2-oxobutanoate: step 1/2. Catalyzes the reversible reaction in which hydroxymethyl group from 5,10-methylenetetrahydrofolate is transferred onto alpha-ketoisovalerate to form ketopantoate. This is 3-methyl-2-oxobutanoate hydroxymethyltransferase from Klebsiella pneumoniae (strain 342).